Here is a 290-residue protein sequence, read N- to C-terminus: Nucleotide-binding protein Aave_3603 (290 aa).

Residue 13 to 20 (GMSGSGKS) participates in ATP binding. Residue 62-65 (DVRS) participates in GTP binding.

The protein belongs to the RapZ-like family.

Functionally, displays ATPase and GTPase activities. The protein is Nucleotide-binding protein Aave_3603 of Paracidovorax citrulli (strain AAC00-1) (Acidovorax citrulli).